The chain runs to 616 residues: Cleavage stimulation factor subunit 2 tau variant (616 aa).

Positions 16–94 (RSVFVGNIPY…RALRVDNAAS (79 aa)) constitute an RRM domain. Disordered stretches follow at residues 203–241 (GKSQ…QPQH) and 262–418 (IPAP…SRAM). Composition is skewed to low complexity over residues 223 to 233 (PGPNVLLNQQN) and 319 to 331 (VTPG…GLLG). Threonine 320 is subject to Phosphothreonine. Over residues 368–381 (SGHDTRGPSSHEMR) the composition is skewed to basic and acidic residues. One copy of the 1-1 repeat lies at 418–422 (METRA). The tract at residues 418–462 (METRAMETEVLETRVMERRGMETCAMETRGMEARGMDARGLEMRG) is 9 X 5 AA tandem repeats of M-E-T-R-[AG]. The stretch at 423–427 (METEV) is one 1-2; approximate repeat. The stretch at 428–432 (LETRV) is one 1-3; approximate repeat. The stretch at 433-437 (MERRG) is one 1-4; approximate repeat. A 1-5; approximate repeat occupies 438–442 (METCA). The stretch at 443–447 (METRG) is one 1-6 repeat. The 1-7; approximate repeat unit spans residues 448-452 (MEARG). The stretch at 453 to 457 (MDARG) is one 1-8; approximate repeat. One copy of the 1-9; approximate repeat lies at 458-462 (LEMRG). Repeat copies occupy residues 505–509 (GAGMQ), 510–514 (GTGIQ), 515–519 (GTGMQ), and 520–524 (GAGIQ). The interval 505–549 (GAGMQGTGIQGTGMQGAGIQGGGMQGAGIQGVSIQGGGIQGGGIQ) is 9 X 5 AA tandem repeats of G-[AT]-G-[MI]-Q. The stretch at 525 to 529 (GGGMQ) is one 2-5; approximate repeat. Residues 530–534 (GAGIQ) form a 2-6 repeat. A 2-7; approximate repeat occupies 535-539 (GVSIQ). The stretch at 540 to 544 (GGGIQ) is one 2-8; approximate repeat. The interval 542–573 (GIQGGGIQGASKQGGSQPSSFSPGQSQVTPQD) is disordered. The stretch at 545–549 (GGGIQ) is one 2-9; approximate repeat. Positions 550-568 (GASKQGGSQPSSFSPGQSQ) are enriched in low complexity. Residue serine 563 is modified to Phosphoserine.

It localises to the nucleus. Its function is as follows. May play a significant role in AAUAAA-independent mRNA polyadenylation in germ cells. Directly involved in the binding to pre-mRNAs. This Homo sapiens (Human) protein is Cleavage stimulation factor subunit 2 tau variant (CSTF2T).